The primary structure comprises 2073 residues: MVEAEQVHQSLRSLVLSYAHFSPSILIPASQYLLAAQLRDEFLSLHPAPSAESVEKEGAELEFEHELHLLAGFLGLIAAKEEETPGQYTQLLRIITLEFERTFLAGNEVHAVVHSLGLNIPAQKDVVRFYYHSCALIGQTTKFHGSALLDESSVKLAAIFGGQGYEDYFDELIELYEVYAPFAAELIQVLSKHLFTLSQNEQASKVYSKGLNVLDWLAGERPERDYLVSAPVSLPLVGLTQLVHFSVTAQILGLNPGELASRFSAASGHSQGIVVAAAVSASTDSASFMENAKVALTTLFWIGVRSQQTFPTTTLPPSVVADSLASSEGNPTPMLAVRDLPIETLNKHIETTNTHLPEDRKVSLSLVNGPRSFVVSGPARSLYGLNLSLRKEKADGQNQSRIPHSKRKLRFINRFLSISVPFHSPYLAPVRSLLEKDLQGLQFSALKVPVYSTDDAGDLRFEQPSKLLLALAVMITEKVVHWEEACGFPDVTHIIDFGPGGISGVGSLTRANKDGQGVRVIVADSFESLDMGAKFEIFDRDAKSIEFAPNWVKLYSPKLVKNKLGRVYVDTRLSRMLGLPPLWVAGMTPTSVPWQFCSAIAKAGFTYELAGGGYFDPKMMREAIHKLSLNIPPGAGICVNVIYINPRTYAWQIPLIRDMVAEGYPIRGVTIAAGIPSLEVANELISTLGVQYLCLKPGSVEAVNAVISIAKANPTFPIVLQWTGGRAGGHHSFEDFHSPILLTYSAIRRCDNIVLIAGSGFGGADDTEPYLTGEWSAAFKLPPMPFDGILFGSRLMVAKEAHTSLAAKEAIVAAKGVDDSEWEKTYDGPTGGIVTVLSELGEPIHKLATRGIMFWKELDDTIFSLPRPKRLPALLAKKQYIIKRLNDDFQKVYFPAHIVEQVSPEKFKFEAVDSVEDMTYAELLYRAIDLMYVTKEKRWIDVTLRTFTGKLMRRIEERFTQDVGKTTLIENFEDLNDPYPVAARFLDAYPEASTQDLNTQDAQFFYSLCSNPFQKPVPFIPAIDDTFEFYFKKDSLWQSEDLAAVVGEDVGRVAILQGPMAAKHSTKVNEPAKELLDGINETHIQHFIKKFYAGDEKKIPIVEYFGGVPPVNVSHKSLESVSVTEEAGSKVYKLPEIGSNSALPSKKLWFELLAGPEYTWFRAIFTTQRVAKGWKLEHNPVRRIFAPRYGQRAVVKGKDNDTVVELYETQSGNYVLAARLSYDGETIVVSMFENRNALKKEVHLDFLFKYEPSAGYSPVSEILDGRNDRIKHFYWALWFGEEPYPENASITDTFTGPEVTVTGNMIEDFCRTVGNHNEAYTKRAIRKRMAPMDFAIVVGWQAITKAIFPKAIDGDLLRLVHLSNSFRMVGSHSLMEGDKVTTSASIIAILNNDSGKTVTVKGTVYRDGKEVIEVISRFLYRGTFTDFENTFEHTQETPMQLTLATPKDVAVLQSKSWFQLLDPSQDLSGSILTFRLNSYVRFKDQKVKSSVETKGIVLSELPSKAIIQVASVDFQSVDCHGNPVIEFLKRNGKPIEQPVEFENGGYSVIQVMDEGYSPVFVTPPTNSPYAEVSGDYNPIHVSPTFAAFVELPGTHGITHGMYTSAAARRFVETYAAQNVPERVKHYEVTFVNMVLPNTELITKLSHTGMINGRKIIKVEVLNQETSEPVLVGTAEVEQPVSAYVFTGQGSQEQGMGMDLYASSPVARKIWDSADKHFLTNYGFSIIDIVKHNPHSITIHFGGSKGKKIRDNYMAMAYEKLMEDGTSKVVPVFETITKDSTSFSFTHPSGLLSATQFTQPALTLMEKSAFEDMRSKGLVQNDCAFAGHSLGEYSALSAMGDVLSIEALVDLVFLRGLTMQNAVHRDELGRSDYGMVAANPSRVSASFTDAALRFIVDHIGQQTNLLLEIVNYNVENQQYVVSGNLLSLSTLGHVLNFLKVQKIDFEKLKETLTIEQLKEQLTDIVEACHAKTLEQQKKTGRIELERGYATIPLKIDVPFHSSFLRGGVRMFREYLVKKIFPHQINVAKLRGKYIPNLTAKPFEISKEYFQNVYDLTGSQRIKKILQNWDEYESS.

Residues 1–459 (MVEAEQVHQS…VYSTDDAGDL (459 aa)) form an acetyltransferase region. Serine 270 acts as the For acetyltransferase activity in catalysis. Residues 470–858 (ALAVMITEKV…TRGIMFWKEL (389 aa)) form an enoyl reductase region. A Phosphoserine modification is found at serine 1122. Residues 1155-1644 (GPEYTWFRAI…LPNTELITKL (490 aa)) are dehydratase. The For dehydratase activity role is filled by histidine 1361. One can recognise a MaoC-like domain in the interval 1558 to 1667 (PVFVTPPTNS…VEVLNQETSE (110 aa)). The tract at residues 1645 to 2073 (SHTGMINGRK…LQNWDEYESS (429 aa)) is malonyl/palmitoyl transferase. The active-site For malonyltransferase activity is the serine 1828. Serine 2073 bears the Phosphoserine mark.

Belongs to the fungal fatty acid synthetase subunit beta family. In terms of assembly, [Alpha(6)beta(6)] hexamers of two multifunctional subunits (alpha and beta).

The catalysed reaction is acetyl-CoA + n malonyl-CoA + 2n NADPH + 4n H(+) = a long-chain-acyl-CoA + n CoA + n CO2 + 2n NADP(+).. It carries out the reaction holo-[ACP] + acetyl-CoA = acetyl-[ACP] + CoA. The enzyme catalyses holo-[ACP] + malonyl-CoA = malonyl-[ACP] + CoA. It catalyses the reaction a (3R)-hydroxyacyl-[ACP] = a (2E)-enoyl-[ACP] + H2O. The catalysed reaction is a 2,3-saturated acyl-[ACP] + NAD(+) = a (2E)-enoyl-[ACP] + NADH + H(+). It carries out the reaction (9Z)-octadecenoyl-[ACP] + H2O = (9Z)-octadecenoate + holo-[ACP] + H(+). In terms of biological role, fatty acid synthetase catalyzes the formation of long-chain fatty acids from acetyl-CoA, malonyl-CoA and NADPH. The beta subunit contains domains for: [acyl-carrier-protein] acetyltransferase and malonyltransferase, S-acyl fatty acid synthase thioesterase, enoyl-[acyl-carrier-protein] reductase, and 3-hydroxypalmitoyl-[acyl-carrier-protein] dehydratase. This chain is Fatty acid synthase subunit beta (fas1), found in Schizosaccharomyces pombe (strain 972 / ATCC 24843) (Fission yeast).